A 468-amino-acid polypeptide reads, in one-letter code: Interstitial collagenase (468 aa).

The first 18 residues, 1-18 (MPGLPLLLLLLWGVGSHG), serve as a signal peptide directing secretion. Residues 19–98 (FPAASETQEQ…PRCGVPDVAQ (80 aa)) constitute a propeptide, activation peptide. The Cysteine switch motif lies at 89–96 (PRCGVPDV). A Zn(2+)-binding site is contributed by Cys91. N-linked (GlcNAc...) asparagine glycosylation occurs at Asn119. Positions 123 and 157 each coordinate Ca(2+). Zn(2+)-binding residues include His167 and Asp169. Ca(2+) is bound by residues Asp174, Gly175, Glu177, and Gln179. Zn(2+) is bound at residue His182. Ca(2+) contacts are provided by Gly189, Gly191, and Asp193. His195 lines the Zn(2+) pocket. Ca(2+) is bound by residues Asp197, Glu198, and Asp200. Position 217 (His217) interacts with Zn(2+). The active site involves Glu218. Residues His221 and His227 each contribute to the Zn(2+) site. Position 273 is a phosphothreonine (Thr273). Hemopexin repeat units lie at residues 274 to 323 (PKVC…WPHL), 324 to 370 (PNGL…FGFP), 373 to 421 (VNHI…FPGI), and 422 to 465 (GNKV…WFNC). A disulfide bond links Cys277 and Cys465. Positions 284 and 328 each coordinate Ca(2+). Residue Tyr359 is modified to Phosphotyrosine; by PKDCC. Asp377 and Asp426 together coordinate Ca(2+).

It belongs to the peptidase M10A family. Ca(2+) is required as a cofactor. It depends on Zn(2+) as a cofactor. Post-translationally, tyrosine phosphorylated in platelets by PKDCC/VLK.

The protein resides in the secreted. The protein localises to the extracellular space. Its subcellular location is the extracellular matrix. It catalyses the reaction Cleavage of the triple helix of collagen at about three-quarters of the length of the molecule from the N-terminus, at 775-Gly-|-Ile-776 in the alpha1(I) chain. Cleaves synthetic substrates and alpha-macroglobulins at bonds where P1' is a hydrophobic residue.. Its activity is regulated as follows. Can be activated without removal of the activation peptide. In terms of biological role, cleaves collagens of types I, II, and III at one site in the helical domain. Also cleaves collagens of types VII and X. This Oryctolagus cuniculus (Rabbit) protein is Interstitial collagenase (MMP1).